We begin with the raw amino-acid sequence, 634 residues long: MSTSSHSGDCAAITSNSNSTIILSAIGVVFGDIGTSPLYTLKEAFSPNYGLAPNHDTVLGILSLIFWAMMLVVTIKYVTVIMRVDNDGEGGIMALTALTQRTMPFGSRSIYIVGILGIFGTSLFFGDGIITPAISVLSAVEGLEVAEPHMKAFVVPITLAVLILLFLCQRFGTERVGKTFGPITFLWFIAIGVVGVYNIIQAPEVLYAINPWWGLHFFLEHGWHSMFVLGAVVLAVTGGEALYADMGHFGAKAIRHAWMYVVLPMLALNYLGQGALVLSNPTAIGNPFYQSIPDWGLYPMIALATAAAVIASQALITGSYSLSSQAMQLGYIPRMNVRHTSQSTIGQIYVPTVNWTLLMLVILTVIGFGDSTSMASAYGVAVTGTMMITTVLMIIYARANPRVPRLMLLMIAIVFIAVDGAFFYANIIKFMDGAWFPLLLGVVIFTFMRTWLRGRKLLHEEMRKDGINLDNFLPGLMLAPPVKVPGTAVFLTADSTVVPHALMHNLKHNKVLHERNVFLTVKTLKIPYAANSERLKIEPISNGFYRVHIRFGFMETPDVPSALMCSKDHAGIDFDPMHTTFFVSRETVIPSANRGMPIWRDKLFVLMHRNAAPANAFFRIPGNRLVELGTQVEI.

A run of 12 helical transmembrane segments spans residues 21–41, 58–78, 110–130, 148–168, 180–200, 217–237, 258–278, 296–316, 348–368, 377–397, 408–428, and 432–452; these read IILSAIGVVFGDIGTSPLYTL, VLGILSLIFWAMMLVVTIKYV, IYIVGILGIFGTSLFFGDGII, PHMKAFVVPITLAVLILLFLC, FGPITFLWFIAIGVVGVYNII, FFLEHGWHSMFVLGAVVLAVT, WMYVVLPMLALNYLGQGALVL, GLYPMIALATAAAVIASQALI, IYVPTVNWTLLMLVILTVIGF, AYGVAVTGTMMITTVLMIIYA, LLMIAIVFIAVDGAFFYANII, and DGAWFPLLLGVVIFTFMRTWL.

The protein belongs to the HAK/KUP transporter (TC 2.A.72) family.

The protein resides in the cell inner membrane. It catalyses the reaction K(+)(in) + H(+)(in) = K(+)(out) + H(+)(out). Transport of potassium into the cell. Likely operates as a K(+):H(+) symporter. The sequence is that of Probable potassium transport system protein Kup from Xylella fastidiosa (strain Temecula1 / ATCC 700964).